Reading from the N-terminus, the 331-residue chain is MLQQLWYGKSGWRWLLAPFALLFAILSGARRFAYRRGWCKAYRATVPVVVVGNISVGGNGKTPVVIWLVEQLQARGFRPGVVSRGYGGKAPHYPYRLDAASTTAQAGDEPVLIARRSGCPVVVAPKRADAVRLLEQSGEVDIIITDDGLQHYGLARDIELVVVDGVRRFGNACLLPMGPLREPVTRLKRVDAIICNGGEPAKGEYAMRLVADVPRRVRDDAQATEPLPRAVDALAGIGHPPRFFATLAGLGYELHQQVGYGDHHAFDRDELVARFGQRPLLMTEKDAVKCRTFALDSWWYLPVSAELPASLLDTLLQKLPSLTVPRSGSGL.

55-62 (SVGGNGKT) is a binding site for ATP.

This sequence belongs to the LpxK family.

The enzyme catalyses a lipid A disaccharide + ATP = a lipid IVA + ADP + H(+). It participates in glycolipid biosynthesis; lipid IV(A) biosynthesis; lipid IV(A) from (3R)-3-hydroxytetradecanoyl-[acyl-carrier-protein] and UDP-N-acetyl-alpha-D-glucosamine: step 6/6. Its function is as follows. Transfers the gamma-phosphate of ATP to the 4'-position of a tetraacyldisaccharide 1-phosphate intermediate (termed DS-1-P) to form tetraacyldisaccharide 1,4'-bis-phosphate (lipid IVA). This Aeromonas salmonicida (strain A449) protein is Tetraacyldisaccharide 4'-kinase.